We begin with the raw amino-acid sequence, 447 residues long: N-succinylarginine dihydrolase (447 aa).

Residues 19 to 28, Asn110, and 137 to 138 contribute to the substrate site; these read AGLSFGNEAS and HR. Residue Glu174 is part of the active site. Residue Arg212 coordinates substrate. The active site involves His248. 2 residues coordinate substrate: Asp250 and Asn359. Cys365 (nucleophile) is an active-site residue.

Belongs to the succinylarginine dihydrolase family. In terms of assembly, homodimer.

The catalysed reaction is N(2)-succinyl-L-arginine + 2 H2O + 2 H(+) = N(2)-succinyl-L-ornithine + 2 NH4(+) + CO2. The protein operates within amino-acid degradation; L-arginine degradation via AST pathway; L-glutamate and succinate from L-arginine: step 2/5. Catalyzes the hydrolysis of N(2)-succinylarginine into N(2)-succinylornithine, ammonia and CO(2). The polypeptide is N-succinylarginine dihydrolase (Salmonella typhi).